The sequence spans 429 residues: S-adenosylmethionine synthase (429 aa).

Position 14 (histidine 14) interacts with ATP. A Mg(2+)-binding site is contributed by aspartate 16. A K(+)-binding site is contributed by glutamate 42. The L-methionine site is built by glutamate 55 and glutamine 98. The interval 98 to 108 (QSADINRGVDR) is flexible loop. Residues 165–167 (DAK), 252–253 (KF), aspartate 261, 267–268 (RK), alanine 284, and lysine 288 each bind ATP. Aspartate 261 serves as a coordination point for L-methionine. Lysine 292 serves as a coordination point for L-methionine.

This sequence belongs to the AdoMet synthase family. As to quaternary structure, homotetramer; dimer of dimers. Requires Mg(2+) as cofactor. K(+) is required as a cofactor.

Its subcellular location is the cytoplasm. It carries out the reaction L-methionine + ATP + H2O = S-adenosyl-L-methionine + phosphate + diphosphate. Its pathway is amino-acid biosynthesis; S-adenosyl-L-methionine biosynthesis; S-adenosyl-L-methionine from L-methionine: step 1/1. Functionally, catalyzes the formation of S-adenosylmethionine (AdoMet) from methionine and ATP. The overall synthetic reaction is composed of two sequential steps, AdoMet formation and the subsequent tripolyphosphate hydrolysis which occurs prior to release of AdoMet from the enzyme. This Porphyromonas gingivalis (strain ATCC 33277 / DSM 20709 / CIP 103683 / JCM 12257 / NCTC 11834 / 2561) protein is S-adenosylmethionine synthase.